A 445-amino-acid chain; its full sequence is Protein trichome berefringence-like 7 (445 aa).

A helical; Signal-anchor for type II membrane protein membrane pass occupies residues 69–89 (IIAGTIVSFLVIIAGGYLYVV). The short motif at 188 to 190 (GDS) is the GDS motif element. A DCXHWCLPGXXDXWN motif motif is present at residues 418–432 (DCSHWCLPGVPDIWN).

The protein belongs to the PC-esterase family. TBL subfamily.

The protein localises to the membrane. Its function is as follows. May act as a bridging protein that binds pectin and other cell wall polysaccharides. Probably involved in maintaining esterification of pectins. May be involved in the specific O-acetylation of cell wall polymers. The sequence is that of Protein trichome berefringence-like 7 (TBL7) from Arabidopsis thaliana (Mouse-ear cress).